The primary structure comprises 685 residues: Protein argonaute (685 aa).

The segment at 1 to 99 (MNHLGKTEVF…LYPKGRRPLD (99 aa)) is N-terminal domain. The tract at residues 100-176 (PKDPGERSVL…VDPAYRILCE (77 aa)) is linker L1. The PAZ domain occupies 169–265 (PAYRILCEMS…HLTGLLVPVL (97 aa)). The linker L2 stretch occupies residues 272 to 337 (EEEGSLALSL…SKPADALRVG (66 aa)). The tract at residues 338–463 (FYRAQETALA…LLAKAGLQVV (126 aa)) is mid domain. The tract at residues 464-685 (ALSGAYPAEL…EVDREKLFFV (222 aa)) is PIWI domain. Catalysis depends on residues D478, E512, D546, and D660. Position 478 (D478) interacts with Mn(2+). Residues 507–671 (EAQAGERIPQ…LVKEVGRLGI (165 aa)) form the Piwi domain. Residues D546, D660, and V685 each coordinate Mn(2+).

Belongs to the argonaute family. Long pAgo subfamily. In terms of assembly, coimmunoprecipitates with a number of proteins involved in DNA replication or recombination including RepA (initiates replication), AddA/B (TT_C0638 and TT_C0639), ArgR, GyrA/B, HU (TT_C0984), PriA, Rad52 (TT_C1923), RecJ, SSB, TopA and UvrB. Most proteins remain associated with TtAgo after DNase treatment and associate with catalytically inactive protein. It depends on Mn(2+) as a cofactor.

Its function is as follows. A DNA-guided ssDNA endonuclease. Uses short ssDNA sequences as guides (gDNA, also called small interfering DNA, siDNA) to bind complementary DNA target strands, resulting in cleavage of the target DNA (tDNA). The cleavage site is 10 nucleotides (nt) downstream of the target residue base-paired with the 5'-end of the gDNA. Plays a role in completion of DNA replication, participates in decatenating replicated DNA and plasmid. In situ purifies with 5'-phosphorylated long DNA (about 1160 nt, maps to the whole chromosome and plasmid), 25-35 nt RNAs that map to the whole chromosome and 15-18 nt DNA that maps to the replication terminus region (ter) on the chromosome and plasmid. Most short DNA starts with dC. Has been shown to have guide sequence-independent dsDNase activity called 'chopping', which requires unstable DNA (high AT-content, multiple mismatches or low salt conditions), and could be used to generate gDNA. Preferentially binds tDNA with dC at its 3'-terminus. Has also been shown to have no detectable guide sequence-independent dsDNase activity. The latter study proposes TtAgo may acquire gDNA from nicked dsDNA, by binding to 5'-phosphorylated-dC nicks, then cleaving 10 nt away on the opposite strand; subsequently an exonuclease (maybe AddA-AddB helicase/nuclease) trims the ends to generate the gDNA. In terms of biological role, involved in defense against invading mobile genetic elements. TtAgo interferes with plasmid DNA, stimulates expression of specific endogenous genes, including various CRISPR loci and at least part of the CRISPR adaptation machinery, but only when exogenous plasmid DNA is present. Upon purification from E.coli associates with gDNA 13-25 nt long with 5'-phosphorylated ends and with 10-150 nt RNA with 5'-OH. DNA corresponds to the expression plasmid rather than chromosomal DNA; 89% of gDNA starts with dC and 72% has dA in the second position. Endonucleolytically cleaves tDNA with 5'-phosphorylated gDNA but not 5'-phosphorylated gRNA; the active site is involved in processing or binding of ssDNA. Nicks or linearizes supercoiled plasmid target when it has the appropriate gDNA sequences, does not cleave linear tDNA. Positions 4 to 16 of the tDNA need to be base paired to the gDNA for efficient tDNA cleavage. Although the system can support single nucleotide insertions in either the gDNA or tDNA, in all cases cleavage activity is reduced, with a wide range of sequence- and position-specific effects. First characterized as a DNA-guided RNA endonuclease. Uses gDNA to bind complementary RNA target strands, resulting in cleavage of the target RNA. The cleavage site is 10 nucleotides (nt) downstream of the target residue base-paired with the 5'-end of the guide DNA. In Thermus thermophilus (strain ATCC BAA-163 / DSM 7039 / HB27), this protein is Protein argonaute.